A 1138-amino-acid chain; its full sequence is Nonsense-mediated mRNA decay factor SMG7 (1138 aa).

S2 carries the post-translational modification N-acetylserine. TPR repeat units lie at residues 152 to 185 and 187 to 219; these read QHCL…VPSN and QPYN…KFPF. Disordered stretches follow at residues 515–612, 649–745, 838–871, 990–1090, and 1106–1138; these read ATDG…LPSR, STAH…YQQA, QPNM…KSSP, SLPA…PSME, and SSMM…NPPH. At S519 the chain carries Phosphoserine. Polar residues predominate over residues 525–537; it reads VLSTGRNPSNSCD. Residues 548–582 show a composition bias toward basic and acidic residues; that stretch reads ENIKPREVNQGRSFPPKEVKSQTELRKTPVSEARK. Position 575 is a phosphothreonine (T575). Composition is skewed to polar residues over residues 584-597 and 649-673; these read PVTQ…NSQF and STAH…SQQR. The span at 674–721 shows a compositional bias: low complexity; that stretch reads PSGPGPMNQGPQQSQPPSQPPLTSLPAQPTAQSTSQLQVQALAQQQQS. S732 and S848 each carry phosphoserine. Residues 854–868 show a composition bias toward basic and acidic residues; it reads PEQDPVPRMPFEDPK. The span at 990–999 shows a compositional bias: polar residues; it reads SLPASSDHST. Over residues 1000–1026 the composition is skewed to low complexity; the sequence is PASQSPHSSNPSSLPSSPPTHNHNSAP. The segment covering 1037–1051 has biased composition (basic and acidic residues); sequence DNRDRRPADRWKTDK. Over residues 1063-1082 the composition is skewed to polar residues; it reads SATSSSESSWHQASTPSGTW. Over residues 1118-1132 the composition is skewed to low complexity; it reads QLLMQQKQKQQRGQG.

Part of a complex that contains SMG5, SMG7, PPP2CA, a short isoform of UPF3A (isoform UPF3AS, but not isoform UPF3AL) and phosphorylated UPF1. Interacts with DHX34; the interaction is RNA-independent.

Its subcellular location is the cytoplasm. The protein resides in the nucleus. Plays a role in nonsense-mediated mRNA decay. Recruits UPF1 to cytoplasmic mRNA decay bodies. Together with SMG5 is thought to provide a link to the mRNA degradation machinery involving exonucleolytic pathways, and to serve as an adapter for UPF1 to protein phosphatase 2A (PP2A), thereby triggering UPF1 dephosphorylation. The protein is Nonsense-mediated mRNA decay factor SMG7 of Mus musculus (Mouse).